A 149-amino-acid polypeptide reads, in one-letter code: MKVILLRDVPKIGKKGEIKEVSDGYARNYLIPRGFAKEYTEGLERAIKHEKEIEKRKKEREREESEKILKELKKRTHVVKVKAGEGGKIFGAVTAATLAEEISKTTGLKLDKRWFKLDKPIKELGEYSLEVSLPGGVKDTIKIRVEREE.

This sequence belongs to the bacterial ribosomal protein bL9 family.

In terms of biological role, binds to the 23S rRNA. The chain is Large ribosomal subunit protein bL9 from Thermotoga sp. (strain RQ2).